Here is a 244-residue protein sequence, read N- to C-terminus: Small ribosomal subunit protein eS4 (244 aa).

The span at 1-14 (MANKGPRKHLKRLP) shows a compositional bias: basic residues. Positions 1–36 (MANKGPRKHLKRLPAPKNWQISRKTNKYTTRPSAGP) are disordered. The segment covering 19–32 (WQISRKTNKYTTRP) has biased composition (polar residues). An S4 RNA-binding domain is found at 43 to 106 (LPLLLVLRDL…NESFLVVLDE (64 aa)).

It belongs to the eukaryotic ribosomal protein eS4 family.

In Methanococcus aeolicus (strain ATCC BAA-1280 / DSM 17508 / OCM 812 / Nankai-3), this protein is Small ribosomal subunit protein eS4.